The sequence spans 242 residues: U1 small nuclear ribonucleoprotein C (242 aa).

A Matrin-type; degenerate zinc finger spans residues 3–35; sequence YLGDYCDVYLTHDSMSVRKAHNSGRNHLRNVVE. Residues 60-242 are disordered; it reads GQASSNPMLQ…SSPGPSQEGK (183 aa). Composition is skewed to pro residues over residues 90-107, 136-149, 156-183, and 201-213; these read MLPPPPPFGMPGAPPGAP, PPMPGDLPPPPLPN, PFPPPNGFPPNFQFPPPGAAGFPPPPIP, and PVPPPGFPLPGAP. The span at 231-242 shows a compositional bias: polar residues; the sequence is PASSPGPSQEGK.

This sequence belongs to the U1 small nuclear ribonucleoprotein C family. U1 snRNP is composed of the 7 core Sm proteins B/B', D1, D2, D3, E, F and G that assemble in a heptameric protein ring on the Sm site of the small nuclear RNA to form the core snRNP, and at least 3 U1 snRNP-specific proteins U1-70K, U1-A and U1-C. U1-C interacts with U1 snRNA and the 5' splice-site region of the pre-mRNA.

Its subcellular location is the nucleus. Component of the spliceosomal U1 snRNP, which is essential for recognition of the pre-mRNA 5' splice-site and the subsequent assembly of the spliceosome. U1-C is directly involved in initial 5' splice-site recognition for both constitutive and regulated alternative splicing. The interaction with the 5' splice-site seems to precede base-pairing between the pre-mRNA and the U1 snRNA. Stimulates commitment or early (E) complex formation by stabilizing the base pairing of the 5' end of the U1 snRNA and the 5' splice-site region. The polypeptide is U1 small nuclear ribonucleoprotein C (Ajellomyces capsulatus (strain G186AR / H82 / ATCC MYA-2454 / RMSCC 2432) (Darling's disease fungus)).